Consider the following 256-residue polypeptide: Alcohol dehydrogenase (256 aa).

Position 12 to 35 (12 to 35) interacts with NAD(+); it reads FVAGLGGIGLDTSKELVKRDLKNL. S140 contacts substrate. The active-site Proton acceptor is Y153.

The protein belongs to the short-chain dehydrogenases/reductases (SDR) family. Homodimer.

The catalysed reaction is a primary alcohol + NAD(+) = an aldehyde + NADH + H(+). The enzyme catalyses a secondary alcohol + NAD(+) = a ketone + NADH + H(+). This Drosophila mauritiana (Fruit fly) protein is Alcohol dehydrogenase (Adh).